A 237-amino-acid chain; its full sequence is ATP synthase subunit 4, mitochondrial (237 aa).

A mitochondrion-targeting transit peptide spans 1 to 30 (MFRALTLKASARPVVAGLCSRQAPIAAVRY).

It belongs to the eukaryotic ATPase B chain family.

It is found in the mitochondrion. It localises to the mitochondrion inner membrane. Mitochondrial membrane ATP synthase (F(1)F(0) ATP synthase or Complex V) produces ATP from ADP in the presence of a proton gradient across the membrane which is generated by electron transport complexes of the respiratory chain. F-type ATPases consist of two structural domains, F(1) - containing the extramembraneous catalytic core, and F(0) - containing the membrane proton channel, linked together by a central stalk and a peripheral stalk. During catalysis, ATP synthesis in the catalytic domain of F(1) is coupled via a rotary mechanism of the central stalk subunits to proton translocation. Part of the complex F(0) domain and the peripheric stalk, which acts as a stator to hold the catalytic alpha(3)beta(3) subcomplex and subunit a/ATP6 static relative to the rotary elements. In Kluyveromyces lactis (strain ATCC 8585 / CBS 2359 / DSM 70799 / NBRC 1267 / NRRL Y-1140 / WM37) (Yeast), this protein is ATP synthase subunit 4, mitochondrial (ATP4).